A 481-amino-acid polypeptide reads, in one-letter code: Keratin, type I cytoskeletal 39 (481 aa).

The tract at residues 1 to 25 is disordered; the sequence is MDTKGSTVTISSSTPPQNCSGNTNV. Positions 1 to 90 are head; the sequence is MDTKGSTVTI…RCSDGINSHE (90 aa). The region spanning 90–401 is the IF rod domain; sequence EKETMQILNE…SLLESLDGRL (312 aa). The coil 1A stretch occupies residues 91-125; sequence KETMQILNERLASYLEKVRMLEGENADLEDKIQEE. A linker 1 region spans residues 126 to 136; sequence CSKTLPILCPD. Residues 137-237 form a coil 1B region; the sequence is YLSYYTTIEQ…HEEEINSLQC (101 aa). The segment at 238 to 253 is linker 12; the sequence is QLGDRINIEVTAAPSV. Residues 254–397 are coil 2; the sequence is DLNQILQKMR…ATYRSLLESL (144 aa). The tail stretch occupies residues 398-481; the sequence is DGRLPCNPCT…PCYITRPAKV (84 aa).

This sequence belongs to the intermediate filament family. In terms of assembly, heterotetramer of two type I and two type II keratins.

Functionally, may play a role in late hair differentiation. The sequence is that of Keratin, type I cytoskeletal 39 (Krt39) from Rattus norvegicus (Rat).